The primary structure comprises 364 residues: Chorismate synthase (364 aa).

NADP(+) contacts are provided by Arg48 and Arg54. FMN is bound by residues 125 to 127, 238 to 239, Gly278, 293 to 297, and Arg319; these read RSS, NA, and KPTSS.

It belongs to the chorismate synthase family. Homotetramer. It depends on FMNH2 as a cofactor.

It catalyses the reaction 5-O-(1-carboxyvinyl)-3-phosphoshikimate = chorismate + phosphate. The protein operates within metabolic intermediate biosynthesis; chorismate biosynthesis; chorismate from D-erythrose 4-phosphate and phosphoenolpyruvate: step 7/7. Its function is as follows. Catalyzes the anti-1,4-elimination of the C-3 phosphate and the C-6 proR hydrogen from 5-enolpyruvylshikimate-3-phosphate (EPSP) to yield chorismate, which is the branch point compound that serves as the starting substrate for the three terminal pathways of aromatic amino acid biosynthesis. This reaction introduces a second double bond into the aromatic ring system. This Shewanella woodyi (strain ATCC 51908 / MS32) protein is Chorismate synthase.